The primary structure comprises 487 residues: Probable cytosol aminopeptidase (487 aa).

Lys-253 and Asp-258 together coordinate Mn(2+). The active site involves Lys-265. Residues Asp-277, Asp-337, and Glu-339 each contribute to the Mn(2+) site. Residue Arg-341 is part of the active site.

This sequence belongs to the peptidase M17 family. Mn(2+) is required as a cofactor.

It localises to the cytoplasm. It catalyses the reaction Release of an N-terminal amino acid, Xaa-|-Yaa-, in which Xaa is preferably Leu, but may be other amino acids including Pro although not Arg or Lys, and Yaa may be Pro. Amino acid amides and methyl esters are also readily hydrolyzed, but rates on arylamides are exceedingly low.. It carries out the reaction Release of an N-terminal amino acid, preferentially leucine, but not glutamic or aspartic acids.. Its function is as follows. Presumably involved in the processing and regular turnover of intracellular proteins. Catalyzes the removal of unsubstituted N-terminal amino acids from various peptides. This is Probable cytosol aminopeptidase from Parasynechococcus marenigrum (strain WH8102).